The chain runs to 382 residues: ATP phosphoribosyltransferase regulatory subunit (382 aa).

The protein belongs to the class-II aminoacyl-tRNA synthetase family. HisZ subfamily. In terms of assembly, heteromultimer composed of HisG and HisZ subunits.

The protein localises to the cytoplasm. The protein operates within amino-acid biosynthesis; L-histidine biosynthesis; L-histidine from 5-phospho-alpha-D-ribose 1-diphosphate: step 1/9. Functionally, required for the first step of histidine biosynthesis. May allow the feedback regulation of ATP phosphoribosyltransferase activity by histidine. In Burkholderia cenocepacia (strain HI2424), this protein is ATP phosphoribosyltransferase regulatory subunit.